A 542-amino-acid polypeptide reads, in one-letter code: DM7 family protein CG15333 (542 aa).

It belongs to the DM7 family.

The chain is DM7 family protein CG15333 from Drosophila melanogaster (Fruit fly).